The primary structure comprises 157 residues: MFDILMYLFENYIHSEMEVVVDHDELTNELTRAGFRHQEIQKALAWLERLADLQQMETKSYLDVAPQQSTRIYTAAEMTRLDSQSRGFLMYLENLGVLDFATREVVIDRVMELETPNFTLDDLKWVVLMVLFNVPGQEAAYDQMEGLLFEEAEGPLH.

It belongs to the Smg family.

In Idiomarina loihiensis (strain ATCC BAA-735 / DSM 15497 / L2-TR), this protein is Protein Smg homolog.